Consider the following 979-residue polypeptide: Chromosome partition protein Smc (979 aa).

Proline 33 to asparagine 40 lines the ATP pocket. A coiled-coil region spans residues serine 169–asparagine 400. Residues aspartate 419–alanine 538 form the SMC hinge domain. Coiled coils occupy residues isoleucine 572–serine 716 and serine 750–isoleucine 818.

It belongs to the SMC family. In terms of assembly, homodimer.

The protein localises to the cytoplasm. Required for chromosome condensation and partitioning. This chain is Chromosome partition protein Smc, found in Mesomycoplasma hyorhinis (Mycoplasma hyorhinis).